Consider the following 223-residue polypeptide: Ribose-5-phosphate isomerase A (223 aa).

Residues 32-35 (TGST), 85-88 (DGAD), and 98-101 (KGGG) contribute to the substrate site. Glu-107 (proton acceptor) is an active-site residue. Lys-125 serves as a coordination point for substrate.

Belongs to the ribose 5-phosphate isomerase family. In terms of assembly, homodimer.

It catalyses the reaction aldehydo-D-ribose 5-phosphate = D-ribulose 5-phosphate. It functions in the pathway carbohydrate degradation; pentose phosphate pathway; D-ribose 5-phosphate from D-ribulose 5-phosphate (non-oxidative stage): step 1/1. Catalyzes the reversible conversion of ribose-5-phosphate to ribulose 5-phosphate. This is Ribose-5-phosphate isomerase A from Marinomonas sp. (strain MWYL1).